The sequence spans 304 residues: tRNA dimethylallyltransferase (304 aa).

Position 8–15 (8–15 (GPTASGKS)) interacts with ATP. 10-15 (TASGKS) serves as a coordination point for substrate. Residues 33-36 (DSRQ) form an interaction with substrate tRNA region.

The protein belongs to the IPP transferase family. Monomer. Requires Mg(2+) as cofactor.

It catalyses the reaction adenosine(37) in tRNA + dimethylallyl diphosphate = N(6)-dimethylallyladenosine(37) in tRNA + diphosphate. Catalyzes the transfer of a dimethylallyl group onto the adenine at position 37 in tRNAs that read codons beginning with uridine, leading to the formation of N6-(dimethylallyl)adenosine (i(6)A). This chain is tRNA dimethylallyltransferase, found in Chlorobium luteolum (strain DSM 273 / BCRC 81028 / 2530) (Pelodictyon luteolum).